Consider the following 574-residue polypeptide: ATP-dependent lipid A-core flippase (574 aa).

4 helical membrane passes run 11–31 (LLSY…GFGI), 60–80 (WFPL…FMGG), 156–176 (YTNW…GVLV), and 244–264 (LNSP…VWLA). One can recognise an ABC transmembrane type-1 domain in the interval 23 to 304 (LLVLVGFGIN…LTDVNEKLQR (282 aa)). The ABC transporter domain occupies 335–570 (VRFDHVTLEY…QGAYFQLHQR (236 aa)). 368–375 (GRSGAGKT) contributes to the ATP binding site.

Belongs to the ABC transporter superfamily. Lipid exporter (TC 3.A.1.106) family. In terms of assembly, homodimer.

Its subcellular location is the cell inner membrane. It catalyses the reaction ATP + H2O + lipid A-core oligosaccharideSide 1 = ADP + phosphate + lipid A-core oligosaccharideSide 2.. Functionally, involved in lipopolysaccharide (LPS) biosynthesis. Translocates lipid A-core from the inner to the outer leaflet of the inner membrane. Transmembrane domains (TMD) form a pore in the inner membrane and the ATP-binding domain (NBD) is responsible for energy generation. This chain is ATP-dependent lipid A-core flippase, found in Acinetobacter baylyi (strain ATCC 33305 / BD413 / ADP1).